The sequence spans 276 residues: 3-methyl-2-oxobutanoate hydroxymethyltransferase (276 aa).

Residues Asp-45 and Asp-84 each coordinate Mg(2+). 3-methyl-2-oxobutanoate-binding positions include 45 to 46, Asp-84, and Lys-114; that span reads DS. Glu-116 is a Mg(2+) binding site. The Proton acceptor role is filled by Glu-183.

It belongs to the PanB family. Homodecamer; pentamer of dimers. Requires Mg(2+) as cofactor.

Its subcellular location is the cytoplasm. The catalysed reaction is 3-methyl-2-oxobutanoate + (6R)-5,10-methylene-5,6,7,8-tetrahydrofolate + H2O = 2-dehydropantoate + (6S)-5,6,7,8-tetrahydrofolate. It participates in cofactor biosynthesis; (R)-pantothenate biosynthesis; (R)-pantoate from 3-methyl-2-oxobutanoate: step 1/2. Functionally, catalyzes the reversible reaction in which hydroxymethyl group from 5,10-methylenetetrahydrofolate is transferred onto alpha-ketoisovalerate to form ketopantoate. This chain is 3-methyl-2-oxobutanoate hydroxymethyltransferase, found in Carboxydothermus hydrogenoformans (strain ATCC BAA-161 / DSM 6008 / Z-2901).